A 100-amino-acid polypeptide reads, in one-letter code: Large ribosomal subunit protein uL23 (100 aa).

This sequence belongs to the universal ribosomal protein uL23 family. In terms of assembly, part of the 50S ribosomal subunit. Contacts protein L29, and trigger factor when it is bound to the ribosome.

In terms of biological role, one of the early assembly proteins it binds 23S rRNA. One of the proteins that surrounds the polypeptide exit tunnel on the outside of the ribosome. Forms the main docking site for trigger factor binding to the ribosome. In Prochlorococcus marinus (strain MIT 9312), this protein is Large ribosomal subunit protein uL23.